We begin with the raw amino-acid sequence, 486 residues long: 2-succinylbenzoate--CoA ligase (486 aa).

It belongs to the ATP-dependent AMP-binding enzyme family. MenE subfamily.

It carries out the reaction 2-succinylbenzoate + ATP + CoA = 2-succinylbenzoyl-CoA + AMP + diphosphate. It functions in the pathway quinol/quinone metabolism; 1,4-dihydroxy-2-naphthoate biosynthesis; 1,4-dihydroxy-2-naphthoate from chorismate: step 5/7. The protein operates within quinol/quinone metabolism; menaquinone biosynthesis. Functionally, converts 2-succinylbenzoate (OSB) to 2-succinylbenzoyl-CoA (OSB-CoA). The polypeptide is 2-succinylbenzoate--CoA ligase (Bacillus subtilis (strain 168)).